Reading from the N-terminus, the 200-residue chain is ATP synthase subunit s, mitochondrial (200 aa).

Residues 1–25 constitute a mitochondrion transit peptide; that stretch reads MMLFGKISQQLCGLKKLPWSRDSRY. The N-terminal domain stretch occupies residues 1 to 61; that stretch reads MMLFGKISQQ…SEWLLRCGAM (61 aa). Glycine 59 provides a ligand contact to Mg(2+). 4 LRR repeats span residues 62 to 87, 88 to 116, 117 to 141, and 142 to 173; these read VRYHGQQRWQKDYNHLPTGPLDKYKI, QAIDATDSCIMSIGFDHMEGLQYVEKIRL, CKCHYIEDGCLERLSQLENLQKSML, and EMEIISCGNVTDKGIIALHHFRNLKYLFLSDL. Residue threonine 93 coordinates Mg(2+).

It belongs to the ATP synthase subunit s family. In terms of assembly, homotetramer. Associates with ATP synthase.

The protein resides in the mitochondrion. It is found in the mitochondrion inner membrane. Involved in regulation of mitochondrial membrane ATP synthase. Necessary for H(+) conduction of ATP synthase. Facilitates energy-driven catalysis of ATP synthesis by blocking a proton leak through an alternative proton exit pathway. The chain is ATP synthase subunit s, mitochondrial (DMAC2L) from Bos taurus (Bovine).